The chain runs to 241 residues: tRNA (guanine-N(1)-)-methyltransferase (241 aa).

S-adenosyl-L-methionine contacts are provided by residues Gly108 and 127-132 (LGDYVL).

This sequence belongs to the RNA methyltransferase TrmD family. Homodimer.

Its subcellular location is the cytoplasm. It carries out the reaction guanosine(37) in tRNA + S-adenosyl-L-methionine = N(1)-methylguanosine(37) in tRNA + S-adenosyl-L-homocysteine + H(+). Its function is as follows. Specifically methylates guanosine-37 in various tRNAs. The sequence is that of tRNA (guanine-N(1)-)-methyltransferase from Streptococcus suis (strain 98HAH33).